A 347-amino-acid chain; its full sequence is O-methyltransferase aunE (347 aa).

Tryptophan 166 is an S-adenosyl-L-methionine binding site. The active-site Proton acceptor is histidine 265.

It belongs to the class I-like SAM-binding methyltransferase superfamily. Cation-independent O-methyltransferase family.

Its pathway is secondary metabolite biosynthesis. Its function is as follows. O-methyltransferase; part of the gene cluster that mediates the biosynthesis of aurasperone B, a dimeric gamma-naphthopyrone. The first step in the biosynthesis of aurasperone B is the production of gamma-naphthopyrone precursor YWA1 by the non-reducing polyketide synthase albA, via condensation of one acetyl-CoA starter unit with 6 malonyl-CoA units. YWA1 is then methylated by aunE at position C-6 to yield foncesin which is further methylated at position C-8 by aunD to produce fonsecin B. A key enzyme in the biosynthetic pathway is the cytochrome P450 monooxygenase aunB which catalyzes the oxidative dimerization of fonsecin B to aurasperone B. AunB also catalyzes the oxidative dimerization of rubrofusarin B into aurasperone A. This is O-methyltransferase aunE from Aspergillus niger (strain ATCC 1015 / CBS 113.46 / FGSC A1144 / LSHB Ac4 / NCTC 3858a / NRRL 328 / USDA 3528.7).